We begin with the raw amino-acid sequence, 1766 residues long: DNA-directed RNA polymerase II subunit RPB1-B (1766 aa).

Residues Cys69, Cys72, Cys79, and His82 each contribute to the Zn(2+) site. Residues Asp487, Asp489, and Asp491 each contribute to the Mg(2+) site. Residues 813–825 (PHEFFFHTMAGRE) form a bridging helix region. The disordered stretch occupies residues 1660-1766 (HAMSSAAPPS…EFGDEEEEEQ (107 aa)). Residues 1706 to 1716 (RGDEPSTHRSD) are compositionally biased toward basic and acidic residues. Residues 1742 to 1756 (PTAKTPQQAAPPTAA) show a composition bias toward low complexity.

It belongs to the RNA polymerase beta' chain family. As to quaternary structure, component of the RNA polymerase II (Pol II) complex consisting of 12 subunits.

The protein resides in the nucleus. It catalyses the reaction RNA(n) + a ribonucleoside 5'-triphosphate = RNA(n+1) + diphosphate. DNA-dependent RNA polymerase catalyzes the transcription of DNA into RNA using the four ribonucleoside triphosphates as substrates. Largest and catalytic component of RNA polymerase II which synthesizes mRNA precursors and many functional non-coding RNAs. Forms the polymerase active center together with the second largest subunit. Pol II is the central component of the basal RNA polymerase II transcription machinery. It is composed of mobile elements that move relative to each other. RPB1 is part of the core element with the central large cleft, the clamp element that moves to open and close the cleft and the jaws that are thought to grab the incoming DNA template. At the start of transcription, a single-stranded DNA template strand of the promoter is positioned within the central active site cleft of Pol II. A bridging helix emanates from RPB1 and crosses the cleft near the catalytic site and is thought to promote translocation of Pol II by acting as a ratchet that moves the RNA-DNA hybrid through the active site by switching from straight to bent conformations at each step of nucleotide addition. During transcription elongation, Pol II moves on the template as the transcript elongates. This Trypanosoma brucei brucei protein is DNA-directed RNA polymerase II subunit RPB1-B (TRP5.9).